The sequence spans 112 residues: Ciliary microtubule inner protein 3 (112 aa).

Residues 1–34 (MCKDSQKPSVPSHGPKTPSCKGVKAPHSSRPRAW) are disordered.

Belongs to the CIMIP3-like family.

It is found in the cytoplasm. It localises to the cytoskeleton. Its subcellular location is the flagellum axoneme. This Homo sapiens (Human) protein is Ciliary microtubule inner protein 3.